A 177-amino-acid chain; its full sequence is Alkyl hydroperoxide reductase AhpD (177 aa).

The Proton donor role is filled by C131. A disulfide bridge links C131 with C134. The active-site Cysteine sulfenic acid (-SOH) intermediate is C134.

It belongs to the AhpD family. In terms of assembly, homotrimer.

It catalyses the reaction N(6)-[(R)-dihydrolipoyl]-L-lysyl-[lipoyl-carrier protein] + a hydroperoxide = N(6)-[(R)-lipoyl]-L-lysyl-[lipoyl-carrier protein] + an alcohol + H2O. In terms of biological role, antioxidant protein with alkyl hydroperoxidase activity. Required for the reduction of the AhpC active site cysteine residues and for the regeneration of the AhpC enzyme activity. The polypeptide is Alkyl hydroperoxide reductase AhpD (Streptomyces griseus subsp. griseus (strain JCM 4626 / CBS 651.72 / NBRC 13350 / KCC S-0626 / ISP 5235)).